The sequence spans 610 residues: Elongation factor 4 (610 aa).

The 183-residue stretch at 13 to 195 folds into the tr-type G domain; that stretch reads SHIRNFSIVA…AIVNRLPAPK (183 aa). GTP contacts are provided by residues 25-30 and 142-145; these read DHGKST and NKID.

Belongs to the TRAFAC class translation factor GTPase superfamily. Classic translation factor GTPase family. LepA subfamily.

The protein localises to the cell inner membrane. It catalyses the reaction GTP + H2O = GDP + phosphate + H(+). Required for accurate and efficient protein synthesis under certain stress conditions. May act as a fidelity factor of the translation reaction, by catalyzing a one-codon backward translocation of tRNAs on improperly translocated ribosomes. Back-translocation proceeds from a post-translocation (POST) complex to a pre-translocation (PRE) complex, thus giving elongation factor G a second chance to translocate the tRNAs correctly. Binds to ribosomes in a GTP-dependent manner. The chain is Elongation factor 4 from Rhizobium leguminosarum bv. trifolii (strain WSM2304).